We begin with the raw amino-acid sequence, 505 residues long: Lysine--tRNA ligase (505 aa).

The Mg(2+) site is built by Glu415 and Glu422.

The protein belongs to the class-II aminoacyl-tRNA synthetase family. As to quaternary structure, homodimer. It depends on Mg(2+) as a cofactor.

Its subcellular location is the cytoplasm. The enzyme catalyses tRNA(Lys) + L-lysine + ATP = L-lysyl-tRNA(Lys) + AMP + diphosphate. This chain is Lysine--tRNA ligase, found in Escherichia coli O157:H7.